Consider the following 284-residue polypeptide: 2,3,4,5-tetrahydropyridine-2,6-dicarboxylate N-succinyltransferase (284 aa).

Arg-111 and Asp-148 together coordinate substrate.

It belongs to the transferase hexapeptide repeat family. Homotrimer.

It localises to the cytoplasm. The enzyme catalyses (S)-2,3,4,5-tetrahydrodipicolinate + succinyl-CoA + H2O = (S)-2-succinylamino-6-oxoheptanedioate + CoA. The protein operates within amino-acid biosynthesis; L-lysine biosynthesis via DAP pathway; LL-2,6-diaminopimelate from (S)-tetrahydrodipicolinate (succinylase route): step 1/3. The sequence is that of 2,3,4,5-tetrahydropyridine-2,6-dicarboxylate N-succinyltransferase from Mesorhizobium japonicum (strain LMG 29417 / CECT 9101 / MAFF 303099) (Mesorhizobium loti (strain MAFF 303099)).